The sequence spans 391 residues: Formate-dependent phosphoribosylglycinamide formyltransferase (391 aa).

Residues 20–21 and glutamate 80 each bind N(1)-(5-phospho-beta-D-ribosyl)glycinamide; that span reads EL. ATP contacts are provided by residues arginine 112, lysine 153, 158-163, 193-196, and glutamate 201; these read SSGKGQ and EGFI. The region spanning 117–306 is the ATP-grasp domain; it reads RLAAETLGLP…EFALHVRAIL (190 aa). Positions 265 and 277 each coordinate Mg(2+). N(1)-(5-phospho-beta-D-ribosyl)glycinamide-binding positions include aspartate 284, lysine 354, and 361–362; that span reads RR.

This sequence belongs to the PurK/PurT family. In terms of assembly, homodimer.

The catalysed reaction is N(1)-(5-phospho-beta-D-ribosyl)glycinamide + formate + ATP = N(2)-formyl-N(1)-(5-phospho-beta-D-ribosyl)glycinamide + ADP + phosphate + H(+). It participates in purine metabolism; IMP biosynthesis via de novo pathway; N(2)-formyl-N(1)-(5-phospho-D-ribosyl)glycinamide from N(1)-(5-phospho-D-ribosyl)glycinamide (formate route): step 1/1. Functionally, involved in the de novo purine biosynthesis. Catalyzes the transfer of formate to 5-phospho-ribosyl-glycinamide (GAR), producing 5-phospho-ribosyl-N-formylglycinamide (FGAR). Formate is provided by PurU via hydrolysis of 10-formyl-tetrahydrofolate. This Shewanella sp. (strain ANA-3) protein is Formate-dependent phosphoribosylglycinamide formyltransferase.